The primary structure comprises 519 residues: Glutamate--cysteine ligase (519 aa).

This sequence belongs to the glutamate--cysteine ligase type 1 family. Type 1 subfamily.

The catalysed reaction is L-cysteine + L-glutamate + ATP = gamma-L-glutamyl-L-cysteine + ADP + phosphate + H(+). It participates in sulfur metabolism; glutathione biosynthesis; glutathione from L-cysteine and L-glutamate: step 1/2. The chain is Glutamate--cysteine ligase from Photorhabdus laumondii subsp. laumondii (strain DSM 15139 / CIP 105565 / TT01) (Photorhabdus luminescens subsp. laumondii).